Reading from the N-terminus, the 498-residue chain is ATP synthase subunit beta, chloroplastic (498 aa).

172 to 179 (GGAGVGKT) provides a ligand contact to ATP.

Belongs to the ATPase alpha/beta chains family. In terms of assembly, F-type ATPases have 2 components, CF(1) - the catalytic core - and CF(0) - the membrane proton channel. CF(1) has five subunits: alpha(3), beta(3), gamma(1), delta(1), epsilon(1). CF(0) has four main subunits: a(1), b(1), b'(1) and c(9-12).

The protein localises to the plastid. It localises to the chloroplast thylakoid membrane. It catalyses the reaction ATP + H2O + 4 H(+)(in) = ADP + phosphate + 5 H(+)(out). In terms of biological role, produces ATP from ADP in the presence of a proton gradient across the membrane. The catalytic sites are hosted primarily by the beta subunits. The protein is ATP synthase subunit beta, chloroplastic of Solanum tuberosum (Potato).